Here is a 109-residue protein sequence, read N- to C-terminus: Polyprenyl transferase subC (109 aa).

Transmembrane regions (helical) follow at residues Leu39–Ile59 and Gln84–Leu104.

The protein belongs to the UbiA prenyltransferase family. Requires Mg(2+) as cofactor.

Its subcellular location is the membrane. It functions in the pathway secondary metabolite biosynthesis; terpenoid biosynthesis. Polyprenyl transferase; part of the gene cluster that mediates the biosynthesis of the immunosuppressants subglutinols, meroterpenoids consisting of an alpha-pyrone (4-hydroxy-5,6-dimethyl-2-pyrone) moiety attached to a decalin core fused to a five-membered cyclic ether carrying a prenylside chain. The first step of the pathway is the synthesis of the alpha-pyrone moiety by the polyketide synthase subA via condensation of one acetyl-CoA starter unit with 3 malonyl-CoA units and 2 methylations. The alpha-pyrone is then combined with geranylgeranyl pyrophosphate (GGPP) formed by the GGPP synthase subD through the action of the prenyltransferase subC to yield a linear alpha-pyrone diterpenoid. Subsequent steps in the subglutinol biosynthetic pathway involve the decalin core formation, which is thought to be initiated by the epoxidation of the C10-C11 olefin by the FAD-dependent oxidoreductase subE. The following cyclization cascade would be catalyzed by the terpene cyclase subB. Lastly, the FAD-dependent dehydrogenase subF probably catalyzes the five-membered cyclic ether formation to complete the formation of subglutinol A. Subsequent redox reactions appear to give rise to subglutinol C and D, however, it remains unclear which enzymes are responsible for these transformations. SubD may have secondary function in the conversion of the identified subglutinols to subglutinol analog 45, which seems to be the major product of the cluster. This is Polyprenyl transferase subC from Metarhizium robertsii (strain ARSEF 23 / ATCC MYA-3075) (Metarhizium anisopliae (strain ARSEF 23)).